A 199-amino-acid chain; its full sequence is NAD(P)H dehydrogenase (quinone) (199 aa).

The 187-residue stretch at 4-190 (MLVLYYSAYG…DGARFQGRRV (187 aa)) folds into the Flavodoxin-like domain. FMN contacts are provided by residues 10 to 15 (SAYGHM) and 78 to 80 (TRY). Tyr-12 serves as a coordination point for NAD(+). Trp-98 is a binding site for substrate. Residues 113–119 (STATQYG) and His-134 each bind FMN. The tract at residues 162–181 (GMTTTADGDGSRQPSAQELD) is disordered. The segment covering 163 to 177 (MTTTADGDGSRQPSA) has biased composition (polar residues).

It belongs to the WrbA family. FMN serves as cofactor.

The catalysed reaction is a quinone + NADH + H(+) = a quinol + NAD(+). It catalyses the reaction a quinone + NADPH + H(+) = a quinol + NADP(+). The polypeptide is NAD(P)H dehydrogenase (quinone) (Brucella suis (strain ATCC 23445 / NCTC 10510)).